Reading from the N-terminus, the 86-residue chain is Anti-adapter protein IraP (86 aa).

Residues 1 to 36 adopt a coiled-coil conformation; that stretch reads MKNLIAELLFKLAQKEEESKELCAQVEALEIIVTAM.

It belongs to the IraP family. In terms of assembly, interacts with RssB.

The protein resides in the cytoplasm. Its function is as follows. Inhibits RpoS proteolysis by regulating RssB activity, thereby increasing the stability of the sigma stress factor RpoS especially during phosphate starvation, but also in stationary phase and during nitrogen starvation. Its effect on RpoS stability is due to its interaction with RssB, which probably blocks the interaction of RssB with RpoS, and the consequent delivery of the RssB-RpoS complex to the ClpXP protein degradation pathway. The protein is Anti-adapter protein IraP of Escherichia coli O127:H6 (strain E2348/69 / EPEC).